Reading from the N-terminus, the 429-residue chain is Antho-RFamide neuropeptides type 2 (429 aa).

An N-terminal signal peptide occupies residues M1–A22. The propeptide occupies K23–D233. A compositionally biased stretch (basic and acidic residues) spans G230–R371. The disordered stretch occupies residues G230–S429. Q234 is modified (pyrrolidone carboxylic acid). At F237 the chain carries Phenylalanine amide. The propeptide occupies R239–D241. Q242 is subject to Pyrrolidone carboxylic acid. At F245 the chain carries Phenylalanine amide. The propeptide occupies R247 to D249. Q250 is modified (pyrrolidone carboxylic acid). F253 carries the post-translational modification Phenylalanine amide. Residues R255–D257 constitute a propeptide that is removed on maturation. A Pyrrolidone carboxylic acid modification is found at Q258. F261 is subject to Phenylalanine amide. The propeptide occupies R263–D265. Q266 bears the Pyrrolidone carboxylic acid mark. Position 269 is a phenylalanine amide (F269). Positions R271–D273 are excised as a propeptide. Q274 carries the post-translational modification Pyrrolidone carboxylic acid. At F277 the chain carries Phenylalanine amide. Residues R279–D289 constitute a propeptide that is removed on maturation. At Q290 the chain carries Pyrrolidone carboxylic acid. At F293 the chain carries Phenylalanine amide. The propeptide occupies R295–D297. Q298 carries the pyrrolidone carboxylic acid modification. F301 carries the phenylalanine amide modification. The propeptide occupies R303 to D305. At Q306 the chain carries Pyrrolidone carboxylic acid. F309 bears the Phenylalanine amide mark. A propeptide spanning residues R311–D321 is cleaved from the precursor. At Q322 the chain carries Pyrrolidone carboxylic acid. A Phenylalanine amide modification is found at F325. A propeptide spanning residues R327–D329 is cleaved from the precursor. Q330 carries the pyrrolidone carboxylic acid modification. F333 carries the post-translational modification Phenylalanine amide. The propeptide occupies R335–D342. At Q343 the chain carries Pyrrolidone carboxylic acid. Phenylalanine amide is present on F346. Residues R348 to D355 constitute a propeptide that is removed on maturation. Residue Q356 is modified to Pyrrolidone carboxylic acid. At F359 the chain carries Phenylalanine amide. Residues R361 to D368 constitute a propeptide that is removed on maturation. At Q369 the chain carries Pyrrolidone carboxylic acid. The residue at position 372 (F372) is a Phenylalanine amide. Positions R374–S429 are excised as a propeptide. Residues S392–S429 are compositionally biased toward basic and acidic residues.

Belongs to the FARP (FMRFamide related peptide) family.

It is found in the secreted. Its function is as follows. Not known but it could act as a transmitter at neuromuscular synapses. The chain is Antho-RFamide neuropeptides type 2 from Anthopleura elegantissima (Green aggregating anemone).